The sequence spans 213 residues: Imidazole glycerol phosphate synthase subunit HisH 1 (213 aa).

Residues 4–213 (TVAVIDYGMG…QNFVAWDGRW (210 aa)) form the Glutamine amidotransferase type-1 domain. The active-site Nucleophile is the Cys82. Catalysis depends on residues His191 and Glu193.

In terms of assembly, heterodimer of HisH and HisF.

Its subcellular location is the cytoplasm. The enzyme catalyses 5-[(5-phospho-1-deoxy-D-ribulos-1-ylimino)methylamino]-1-(5-phospho-beta-D-ribosyl)imidazole-4-carboxamide + L-glutamine = D-erythro-1-(imidazol-4-yl)glycerol 3-phosphate + 5-amino-1-(5-phospho-beta-D-ribosyl)imidazole-4-carboxamide + L-glutamate + H(+). The catalysed reaction is L-glutamine + H2O = L-glutamate + NH4(+). It participates in amino-acid biosynthesis; L-histidine biosynthesis; L-histidine from 5-phospho-alpha-D-ribose 1-diphosphate: step 5/9. Its function is as follows. IGPS catalyzes the conversion of PRFAR and glutamine to IGP, AICAR and glutamate. The HisH subunit provides the glutamine amidotransferase activity that produces the ammonia necessary to HisF for the synthesis of IGP and AICAR. This is Imidazole glycerol phosphate synthase subunit HisH 1 (hisH1) from Pseudomonas aeruginosa (strain ATCC 15692 / DSM 22644 / CIP 104116 / JCM 14847 / LMG 12228 / 1C / PRS 101 / PAO1).